Here is a 188-residue protein sequence, read N- to C-terminus: Peptidyl-tRNA hydrolase (188 aa).

Tyr-16 is a tRNA binding site. The active-site Proton acceptor is His-21. Residues Phe-66, Asn-68, and Asn-114 each contribute to the tRNA site.

The protein belongs to the PTH family. Monomer.

It localises to the cytoplasm. It carries out the reaction an N-acyl-L-alpha-aminoacyl-tRNA + H2O = an N-acyl-L-amino acid + a tRNA + H(+). Its function is as follows. Hydrolyzes ribosome-free peptidyl-tRNAs (with 1 or more amino acids incorporated), which drop off the ribosome during protein synthesis, or as a result of ribosome stalling. Functionally, catalyzes the release of premature peptidyl moieties from peptidyl-tRNA molecules trapped in stalled 50S ribosomal subunits, and thus maintains levels of free tRNAs and 50S ribosomes. The sequence is that of Peptidyl-tRNA hydrolase from Citrifermentans bemidjiense (strain ATCC BAA-1014 / DSM 16622 / JCM 12645 / Bem) (Geobacter bemidjiensis).